A 125-amino-acid chain; its full sequence is MIHGIGIDIVDIRKIKKIITHSGDKLATRILSKSEWKIYKNKKHPVHFLAKRFAAKEAVSKAFGTGINQGVTFNQIEIFNDKLGKPMLHLFSCTALLANKLSLKKMHITLSDTNSYACAFVILER.

The Mg(2+) site is built by Asp8 and Glu57.

It belongs to the P-Pant transferase superfamily. AcpS family. Mg(2+) is required as a cofactor.

The protein localises to the cytoplasm. It catalyses the reaction apo-[ACP] + CoA = holo-[ACP] + adenosine 3',5'-bisphosphate + H(+). Functionally, transfers the 4'-phosphopantetheine moiety from coenzyme A to a Ser of acyl-carrier-protein. The protein is Holo-[acyl-carrier-protein] synthase of Blochmanniella pennsylvanica (strain BPEN).